The sequence spans 540 residues: 2,3-bisphosphoglycerate-independent phosphoglycerate mutase (540 aa).

Mn(2+) is bound by residues aspartate 24 and serine 74. The active-site Phosphoserine intermediate is serine 74. Residues histidine 135, 165 to 166 (RD), arginine 197, arginine 203, 268 to 271 (RPDR), and lysine 341 contribute to the substrate site. Residues aspartate 408, histidine 412, aspartate 449, histidine 450, and histidine 467 each contribute to the Mn(2+) site.

It belongs to the BPG-independent phosphoglycerate mutase family. As to quaternary structure, monomer. The cofactor is Mn(2+).

It catalyses the reaction (2R)-2-phosphoglycerate = (2R)-3-phosphoglycerate. It functions in the pathway carbohydrate degradation; glycolysis; pyruvate from D-glyceraldehyde 3-phosphate: step 3/5. Its function is as follows. Catalyzes the interconversion of 2-phosphoglycerate and 3-phosphoglycerate. The protein is 2,3-bisphosphoglycerate-independent phosphoglycerate mutase of Prochlorococcus marinus (strain MIT 9313).